A 312-amino-acid chain; its full sequence is Chitin deacetylase 2 (312 aa).

The signal sequence occupies residues 1-44 (MRIQLNTIDLQCIIALSCLGQFVHAEANREDLKQIDFQFPVLER). An intrachain disulfide couples Cys117 to Cys300. The region spanning 118–307 (SKLSQTFDDG…SHCVGGIDYI (190 aa)) is the NodB homology domain. Asp125 serves as the catalytic Proton acceptor. Asp125 provides a ligand contact to acetate. Position 126 (Asp126) interacts with Co(2+). A glycan (N-linked (GlcNAc...) asparagine) is linked at Asn142. Positions 172 and 176 each coordinate Co(2+). N-linked (GlcNAc...) asparagine glycans are attached at residues Asn181 and Asn199. Tyr213 provides a ligand contact to acetate. N-linked (GlcNAc...) asparagine glycans are attached at residues Asn246 and Asn263. Residue His273 is the Proton donor of the active site.

The protein belongs to the polysaccharide deacetylase family. Monomer. Requires Co(2+) as cofactor. N-glycosylated.

The protein resides in the prospore. It carries out the reaction [(1-&gt;4)-N-acetyl-beta-D-glucosaminyl](n) + n H2O = chitosan + n acetate. Its function is as follows. Hydrolyzes the N-acetamido groups of N-acetyl-D-glucosamine residues in chitin to form chitosan and acetate. Chitosan is a component of the spore wall. In Saccharomyces cerevisiae (strain ATCC 204508 / S288c) (Baker's yeast), this protein is Chitin deacetylase 2.